The sequence spans 462 residues: Fumarate hydratase class II (462 aa).

Substrate contacts are provided by residues 97–99, 127–130, 137–139, and Thr-185; these read SGT, HPND, and SSN. His-186 serves as the catalytic Proton donor/acceptor. Ser-316 is a catalytic residue. Substrate contacts are provided by residues Ser-317 and 322-324; that span reads KVN.

It belongs to the class-II fumarase/aspartase family. Fumarase subfamily. As to quaternary structure, homotetramer.

It localises to the cytoplasm. It carries out the reaction (S)-malate = fumarate + H2O. It functions in the pathway carbohydrate metabolism; tricarboxylic acid cycle; (S)-malate from fumarate: step 1/1. Functionally, involved in the TCA cycle. Catalyzes the stereospecific interconversion of fumarate to L-malate. This chain is Fumarate hydratase class II, found in Halalkalibacterium halodurans (strain ATCC BAA-125 / DSM 18197 / FERM 7344 / JCM 9153 / C-125) (Bacillus halodurans).